The sequence spans 125 residues: Insulin growth factor-like family member 3 (125 aa).

Residues 1–24 (MRPRCCILALVCWITVFLLQCSKG) form the signal peptide.

This sequence belongs to the IGFL family. Detected in the cerebellum.

It is found in the secreted. In terms of biological role, potential ligand of the IGFLR1 cell membrane receptor. In Homo sapiens (Human), this protein is Insulin growth factor-like family member 3 (IGFL3).